The following is a 277-amino-acid chain: Inorganic pyrophosphatase (277 aa).

R80 contacts diphosphate. Mg(2+) contacts are provided by D117, D122, and D154.

The protein belongs to the PPase family. Mg(2+) serves as cofactor.

It is found in the cytoplasm. The enzyme catalyses diphosphate + H2O = 2 phosphate + H(+). Functionally, involved in osmoadaptation. This is Inorganic pyrophosphatase (IPP1) from Encephalitozoon cuniculi (strain GB-M1) (Microsporidian parasite).